Reading from the N-terminus, the 300-residue chain is Geranylgeranyl diphosphate synthase (300 aa).

Residues Lys-50, Arg-53, and His-82 each contribute to the isopentenyl diphosphate site. The Mg(2+) site is built by Asp-89 and Asp-95. Arg-100 contributes to the (2E,6E)-farnesyl diphosphate binding site. An isopentenyl diphosphate-binding site is contributed by Arg-101. Positions 186, 187, and 224 each coordinate (2E,6E)-farnesyl diphosphate.

Belongs to the FPP/GGPP synthase family. It depends on Mg(2+) as a cofactor.

It localises to the plastid. The protein localises to the cyanelle. It catalyses the reaction isopentenyl diphosphate + (2E,6E)-farnesyl diphosphate = (2E,6E,10E)-geranylgeranyl diphosphate + diphosphate. Its pathway is isoprenoid biosynthesis; geranylgeranyl diphosphate biosynthesis; geranylgeranyl diphosphate from farnesyl diphosphate and isopentenyl diphosphate: step 1/1. In terms of biological role, catalyzes the condensation of farnesyl diphosphate (FPP) and isopentenyl diphosphate (IPP) to yield geranylgeranyl diphosphate (GGPP) needed for biosynthesis of carotenoids and diterpenes. This chain is Geranylgeranyl diphosphate synthase (crtE), found in Cyanophora paradoxa.